A 322-amino-acid polypeptide reads, in one-letter code: Deoxyhypusine hydroxylase (322 aa).

HEAT-like PBS-type repeat units lie at residues 76–102 (LKHEVAYVLGQTKNMAGAPLLRDVLAD) and 109–135 (VRHEAAEALGALNDVDSLDILEKYFKE). Residues H78, E79, H111, E112, H236, E237, H269, and E270 each coordinate Fe cation. The HEAT-like PBS-type 3 repeat unit spans residues 267–293 (VRHEAAEALGSIATDDVLPVLKEHLKD).

This sequence belongs to the deoxyhypusine hydroxylase family. The cofactor is Fe(2+).

It is found in the cytoplasm. It localises to the nucleus. The enzyme catalyses [eIF5A protein]-deoxyhypusine + AH2 + O2 = [eIF5A protein]-hypusine + A + H2O. Its pathway is protein modification; eIF5A hypusination. In terms of biological role, catalyzes the hydroxylation of the N(6)-(4-aminobutyl)-L-lysine intermediate to form hypusine, an essential post-translational modification only found in mature eIF-5A factor. This Kluyveromyces lactis (strain ATCC 8585 / CBS 2359 / DSM 70799 / NBRC 1267 / NRRL Y-1140 / WM37) (Yeast) protein is Deoxyhypusine hydroxylase.